A 140-amino-acid chain; its full sequence is Ribosomal RNA large subunit methyltransferase H (140 aa).

Residues Leu-55 and Gly-87 each coordinate S-adenosyl-L-methionine.

This sequence belongs to the RNA methyltransferase RlmH family. As to quaternary structure, homodimer.

It is found in the cytoplasm. The enzyme catalyses pseudouridine(1915) in 23S rRNA + S-adenosyl-L-methionine = N(3)-methylpseudouridine(1915) in 23S rRNA + S-adenosyl-L-homocysteine + H(+). In terms of biological role, specifically methylates the pseudouridine at position 1915 (m3Psi1915) in 23S rRNA. The polypeptide is Ribosomal RNA large subunit methyltransferase H (Rhizorhabdus wittichii (strain DSM 6014 / CCUG 31198 / JCM 15750 / NBRC 105917 / EY 4224 / RW1) (Sphingomonas wittichii)).